We begin with the raw amino-acid sequence, 85 residues long: uncharacterized protein (85 aa).

Residues 39 to 59 form a helical membrane-spanning segment; it reads FILFEISMYIIFIVTFCYKII.

It localises to the host membrane. This is an uncharacterized protein from Gallid herpesvirus 2 (strain Chicken/Md5/ATCC VR-987) (GaHV-2).